The primary structure comprises 272 residues: Formamidopyrimidine-DNA glycosylase (272 aa).

Pro2 acts as the Schiff-base intermediate with DNA in catalysis. Catalysis depends on Glu3, which acts as the Proton donor. Residue Lys58 is the Proton donor; for beta-elimination activity of the active site. DNA-binding residues include His93, Arg112, and Arg153. Residues 238 to 272 form an FPG-type zinc finger; the sequence is HVYGKSGQHCPKCGNILEDLKISNRGTVYCPHCQR. The active-site Proton donor; for delta-elimination activity is Arg262.

The protein belongs to the FPG family. Monomer. Zn(2+) serves as cofactor.

The catalysed reaction is Hydrolysis of DNA containing ring-opened 7-methylguanine residues, releasing 2,6-diamino-4-hydroxy-5-(N-methyl)formamidopyrimidine.. It carries out the reaction 2'-deoxyribonucleotide-(2'-deoxyribose 5'-phosphate)-2'-deoxyribonucleotide-DNA = a 3'-end 2'-deoxyribonucleotide-(2,3-dehydro-2,3-deoxyribose 5'-phosphate)-DNA + a 5'-end 5'-phospho-2'-deoxyribonucleoside-DNA + H(+). In terms of biological role, involved in base excision repair of DNA damaged by oxidation or by mutagenic agents. Acts as a DNA glycosylase that recognizes and removes damaged bases. Has a preference for oxidized purines, such as 7,8-dihydro-8-oxoguanine (8-oxoG). Has AP (apurinic/apyrimidinic) lyase activity and introduces nicks in the DNA strand. Cleaves the DNA backbone by beta-delta elimination to generate a single-strand break at the site of the removed base with both 3'- and 5'-phosphates. This Dichelobacter nodosus (strain VCS1703A) protein is Formamidopyrimidine-DNA glycosylase.